Reading from the N-terminus, the 384-residue chain is Sodium channel protein Nach (384 aa).

At 1–319 (AAFAYFSGFM…LVSHLGSAFS (319 aa)) the chain is on the extracellular side. Asn32 and Asn215 each carry an N-linked (GlcNAc...) asparagine glycan. The chain crosses the membrane as a helical span at residues 320-340 (LFVGMSMLSLVEIIYYFTVIL). The Cytoplasmic portion of the chain corresponds to 341-384 (RRNYVQECRARQKLQTLHRRPNFGWPGDKNSNQQKSVFYIRGRN).

Belongs to the amiloride-sensitive sodium channel (TC 1.A.6) family.

Its subcellular location is the membrane. Its function is as follows. Part of a complex that plays a role in tracheal liquid clearance. Probable role in sodium transport. The chain is Sodium channel protein Nach (Nach) from Drosophila virilis (Fruit fly).